The following is a 130-amino-acid chain: Large ribosomal subunit protein bL17 (130 aa).

This sequence belongs to the bacterial ribosomal protein bL17 family. Part of the 50S ribosomal subunit. Contacts protein L32.

The protein is Large ribosomal subunit protein bL17 of Pectobacterium atrosepticum (strain SCRI 1043 / ATCC BAA-672) (Erwinia carotovora subsp. atroseptica).